The primary structure comprises 67 residues: Sporulation protein 24 (67 aa).

Phosphoserine is present on residues S24 and S32.

Phosphorylated during meiosis. During meiosis, exists in both unphosphorylated and phosphorylated forms with the highest degree of phosphorylation occurring in mid-meiosis.

The protein resides in the prospore membrane. Required for efficient sporulation. In Saccharomyces cerevisiae (strain ATCC 204508 / S288c) (Baker's yeast), this protein is Sporulation protein 24.